The chain runs to 254 residues: MTVEERSNTAKVDILGVDFDNTTMLQMVENIKTFFANQSTNNLFIVTANPEIVNYATTHQAYLELINQASYIVADGTGVVKASHRLKQPLAHRIPGIELMDECLKIAHVNHQKVFLLGATNEVVEAAQYALQQRYPNISFAHHHGYIDLEDETVVKRIKLFKPDYIFVGMGFPKQEEWIMTHENQFESTVMMGVGGSLEVFAGAKKRAPYIFRKLNIEWIYRALMDWKRIGRLKSIPIFMYKIAKAKRKIKKAK.

It belongs to the glycosyltransferase 26 family. TagA/TarA subfamily.

It catalyses the reaction UDP-N-acetyl-alpha-D-mannosamine + N-acetyl-alpha-D-glucosaminyl-di-trans,octa-cis-undecaprenyl diphosphate = N-acetyl-beta-D-mannosaminyl-(1-&gt;4)-N-acetyl-alpha-D-glucosaminyl di-trans,octa-cis-undecaprenyl diphosphate + UDP + H(+). It functions in the pathway cell wall biogenesis; poly(ribitol phosphate) teichoic acid biosynthesis. Catalyzes the conversion of GlcNAc-PP-undecaprenol into ManNAc-GlcNAc-PP-undecaprenol, the first committed lipid intermediate in the de novo synthesis of teichoic acid. The sequence is that of N-acetylglucosaminyldiphosphoundecaprenol N-acetyl-beta-D-mannosaminyltransferase (tarA) from Staphylococcus aureus (strain MW2).